A 498-amino-acid polypeptide reads, in one-letter code: Probable malate:quinone oxidoreductase (498 aa).

This sequence belongs to the MQO family. Requires FAD as cofactor.

It carries out the reaction (S)-malate + a quinone = a quinol + oxaloacetate. Its pathway is carbohydrate metabolism; tricarboxylic acid cycle; oxaloacetate from (S)-malate (quinone route): step 1/1. The chain is Probable malate:quinone oxidoreductase from Prochlorococcus marinus (strain MIT 9312).